Reading from the N-terminus, the 216-residue chain is FMN-dependent NADH:quinone oxidoreductase 3 (216 aa).

FMN-binding positions include S10 and 16–18 (SAS).

This sequence belongs to the azoreductase type 1 family. As to quaternary structure, homodimer. The cofactor is FMN.

It carries out the reaction 2 a quinone + NADH + H(+) = 2 a 1,4-benzosemiquinone + NAD(+). The enzyme catalyses N,N-dimethyl-1,4-phenylenediamine + anthranilate + 2 NAD(+) = 2-(4-dimethylaminophenyl)diazenylbenzoate + 2 NADH + 2 H(+). Its function is as follows. Quinone reductase that provides resistance to thiol-specific stress caused by electrophilic quinones. Also exhibits azoreductase activity. Catalyzes the reductive cleavage of the azo bond in aromatic azo compounds to the corresponding amines. The polypeptide is FMN-dependent NADH:quinone oxidoreductase 3 (Pseudomonas fluorescens (strain ATCC BAA-477 / NRRL B-23932 / Pf-5)).